We begin with the raw amino-acid sequence, 203 residues long: Glycerol-3-phosphate acyltransferase (203 aa).

4 helical membrane-spanning segments follow: residues Leu4 to Ile24, Ile68 to Ile88, Pro117 to Phe137, and Thr155 to Phe175.

It belongs to the PlsY family. As to quaternary structure, probably interacts with PlsX.

Its subcellular location is the cell inner membrane. The enzyme catalyses an acyl phosphate + sn-glycerol 3-phosphate = a 1-acyl-sn-glycero-3-phosphate + phosphate. It participates in lipid metabolism; phospholipid metabolism. In terms of biological role, catalyzes the transfer of an acyl group from acyl-phosphate (acyl-PO(4)) to glycerol-3-phosphate (G3P) to form lysophosphatidic acid (LPA). This enzyme utilizes acyl-phosphate as fatty acyl donor, but not acyl-CoA or acyl-ACP. This Vibrio campbellii (strain ATCC BAA-1116) protein is Glycerol-3-phosphate acyltransferase.